A 191-amino-acid polypeptide reads, in one-letter code: Neuronal calcium sensor 1 (191 aa).

Residue Gly2 is the site of N-myristoyl glycine attachment. 4 EF-hand domains span residues 24-59 (ESEI…FPFG), 60-95 (DPSK…TSRG), 96-131 (TVEE…IYRM), and 144-179 (TPEK…DPTI). Positions 73, 75, 77, 84, 109, 111, 113, 115, 120, 157, 159, 161, 163, and 168 each coordinate Ca(2+).

This sequence belongs to the recoverin family.

It localises to the perikaryon. It is found in the cell projection. The protein resides in the growth cone. In terms of biological role, neuronal calcium sensor, regulator of G protein-coupled receptor phosphorylation in a calcium dependent manner. Regulates neurite extension and branching by activity-dependent Ca(2+) influx in growth cones. The protein is Neuronal calcium sensor 1 of Lymnaea stagnalis (Great pond snail).